The following is a 150-amino-acid chain: Probable histone H2A.7 (150 aa).

Residues 1–12 (MESTGKVKKAFG) show a composition bias toward basic residues. Disordered stretches follow at residues 1–27 (MEST…SVSK) and 129–150 (KSAT…PKKA). S146 is modified (phosphoserine). The short motif at 146 to 149 (SPKK) is the SPKK motif element.

It belongs to the histone H2A family. The nucleosome is a histone octamer containing two molecules each of H2A, H2B, H3 and H4 assembled in one H3-H4 heterotetramer and two H2A-H2B heterodimers. The octamer wraps approximately 147 bp of DNA. Post-translationally, not ubiquitinated. As to expression, strong expression through-out the roots and leaves. Also found in meristems and dividing cells.

It localises to the nucleus. It is found in the chromosome. Core component of nucleosome. Nucleosomes wrap and compact DNA into chromatin, limiting DNA accessibility to the cellular machineries which require DNA as a template. Histones thereby play a central role in transcription regulation, DNA repair, DNA replication and chromosomal stability. DNA accessibility is regulated via a complex set of post-translational modifications of histones, also called histone code, and nucleosome remodeling. This chain is Probable histone H2A.7, found in Arabidopsis thaliana (Mouse-ear cress).